The sequence spans 248 residues: Triosephosphate isomerase (248 aa).

9-11 (NWK) is a binding site for substrate. Catalysis depends on H94, which acts as the Electrophile. E166 (proton acceptor) is an active-site residue. Residues G172, S212, and 233–234 (GG) each bind substrate.

It belongs to the triosephosphate isomerase family. In terms of assembly, homodimer.

The protein resides in the cytoplasm. The enzyme catalyses D-glyceraldehyde 3-phosphate = dihydroxyacetone phosphate. It participates in carbohydrate biosynthesis; gluconeogenesis. The protein operates within carbohydrate degradation; glycolysis; D-glyceraldehyde 3-phosphate from glycerone phosphate: step 1/1. Functionally, involved in the gluconeogenesis. Catalyzes stereospecifically the conversion of dihydroxyacetone phosphate (DHAP) to D-glyceraldehyde-3-phosphate (G3P). This Clostridium botulinum (strain Loch Maree / Type A3) protein is Triosephosphate isomerase.